Reading from the N-terminus, the 182-residue chain is Lipid A acyltransferase PagP (182 aa).

A signal peptide spans 1-21 (MTQYFRALAFFLLLVPATAMA). C22 is lipidated: N-palmitoyl cysteine. C22 carries the S-diacylglycerol cysteine lipid modification. Residues H55, D98, and S99 contribute to the active site.

This sequence belongs to the lipid A palmitoyltransferase family. As to quaternary structure, homodimer.

The protein resides in the cell outer membrane. The enzyme catalyses a lipid A + a 1,2-diacyl-sn-glycero-3-phosphocholine = a hepta-acyl lipid A + a 2-acyl-sn-glycero-3-phosphocholine. It catalyses the reaction a lipid IVA + a 1,2-diacyl-sn-glycero-3-phosphocholine = a lipid IVB + a 2-acyl-sn-glycero-3-phosphocholine. The catalysed reaction is a lipid IIA + a 1,2-diacyl-sn-glycero-3-phosphocholine = a lipid IIB + a 2-acyl-sn-glycero-3-phosphocholine. Its function is as follows. Transfers a fatty acid residue from the sn-1 position of a phospholipid to the N-linked hydroxyfatty acid chain on the proximal unit of lipid A or its precursors. The protein is Lipid A acyltransferase PagP of Bordetella parapertussis (strain 12822 / ATCC BAA-587 / NCTC 13253).